Here is a 207-residue protein sequence, read N- to C-terminus: Ribosomal RNA small subunit methyltransferase G (207 aa).

S-adenosyl-L-methionine is bound by residues G74, L79, 125–126 (VE), and R140.

It belongs to the methyltransferase superfamily. RNA methyltransferase RsmG family.

It localises to the cytoplasm. It catalyses the reaction guanosine(527) in 16S rRNA + S-adenosyl-L-methionine = N(7)-methylguanosine(527) in 16S rRNA + S-adenosyl-L-homocysteine. In terms of biological role, specifically methylates the N7 position of guanine in position 527 of 16S rRNA. In Shewanella pealeana (strain ATCC 700345 / ANG-SQ1), this protein is Ribosomal RNA small subunit methyltransferase G.